Reading from the N-terminus, the 338-residue chain is MKRFNAIRIGELVRIAVLVMPLLLGFGAPIYAAAEVHGEAGAHEAAAVHTDEAHGEAGEHAEGGHGEGGAGDVIMHHILDSNAMEFEPFGKFPLPKIVIGGFDLSITRHVVFMWLAALILLLVFGYVGNKYKSIKSNEAPGGVANAMEALVEFIRLDVAKSNIGEGYEKHMPYLLTVFVFILVLNLLGLIPYGASATGNINVTLTLSVFTFFITQVSAIKSNGIKGYLAHLTAGTHWALWIIMIPIEVIGLFTKPFALTIRLFANMTAGHIIILSLIFISFILKSYIVAIFVSVPFSIFIYLLEIFVSFLQAFIFTMLSALFIGLGSAHEGHEAEGAH.

Residues 15–35 (IAVLVMPLLLGFGAPIYAAAE) traverse the membrane as a helical segment. Positions 45–66 (AAAVHTDEAHGEAGEHAEGGHG) are disordered. A compositionally biased stretch (basic and acidic residues) spans 49 to 65 (HTDEAHGEAGEHAEGGH). 7 helical membrane passes run 109–129 (HVVF…YVGN), 174–194 (LLTV…PYGA), 199–219 (NINV…VSAI), 238–258 (ALWI…PFAL), 262–282 (LFAN…ISFI), 287–307 (IVAI…EIFV), and 308–328 (SFLQ…LGSA).

The protein belongs to the ATPase A chain family. As to quaternary structure, F-type ATPases have 2 components, CF(1) - the catalytic core - and CF(0) - the membrane proton channel. CF(1) has five subunits: alpha(3), beta(3), gamma(1), delta(1), epsilon(1). CF(0) has four main subunits: a, b, b' and c.

It localises to the cell inner membrane. Key component of the proton channel; it plays a direct role in the translocation of protons across the membrane. The chain is ATP synthase subunit a from Chlorobium phaeobacteroides (strain BS1).